We begin with the raw amino-acid sequence, 89 residues long: Large ribosomal subunit protein bL27 (89 aa).

This sequence belongs to the bacterial ribosomal protein bL27 family.

The polypeptide is Large ribosomal subunit protein bL27 (Cereibacter sphaeroides (strain ATCC 17029 / ATH 2.4.9) (Rhodobacter sphaeroides)).